A 250-amino-acid chain; its full sequence is DNA repair protein RecO (250 aa).

It belongs to the RecO family.

In terms of biological role, involved in DNA repair and RecF pathway recombination. The sequence is that of DNA repair protein RecO from Staphylococcus haemolyticus (strain JCSC1435).